The following is an 890-amino-acid chain: Alanine--tRNA ligase (890 aa).

Zn(2+) is bound by residues His-573, His-577, Cys-676, and His-680.

The protein belongs to the class-II aminoacyl-tRNA synthetase family. The cofactor is Zn(2+).

It is found in the cytoplasm. The catalysed reaction is tRNA(Ala) + L-alanine + ATP = L-alanyl-tRNA(Ala) + AMP + diphosphate. Its function is as follows. Catalyzes the attachment of alanine to tRNA(Ala) in a two-step reaction: alanine is first activated by ATP to form Ala-AMP and then transferred to the acceptor end of tRNA(Ala). Also edits incorrectly charged Ser-tRNA(Ala) and Gly-tRNA(Ala) via its editing domain. The chain is Alanine--tRNA ligase from Corynebacterium efficiens (strain DSM 44549 / YS-314 / AJ 12310 / JCM 11189 / NBRC 100395).